A 171-amino-acid polypeptide reads, in one-letter code: Large ribosomal subunit protein uL10 (171 aa).

Belongs to the universal ribosomal protein uL10 family. In terms of assembly, part of the ribosomal stalk of the 50S ribosomal subunit. The N-terminus interacts with L11 and the large rRNA to form the base of the stalk. The C-terminus forms an elongated spine to which L12 dimers bind in a sequential fashion forming a multimeric L10(L12)X complex.

Its function is as follows. Forms part of the ribosomal stalk, playing a central role in the interaction of the ribosome with GTP-bound translation factors. The polypeptide is Large ribosomal subunit protein uL10 (Rhizorhabdus wittichii (strain DSM 6014 / CCUG 31198 / JCM 15750 / NBRC 105917 / EY 4224 / RW1) (Sphingomonas wittichii)).